The sequence spans 374 residues: Tuliposide A-converting enzyme b2, amyloplastic (374 aa).

The N-terminal 68 residues, 1-68 (MSVALFCGPP…TNSSLSPSPT (68 aa)), are a transit peptide targeting the amyloplast. Serine 226 (acyl-ester intermediate) is an active-site residue. Catalysis depends on charge relay system residues aspartate 316 and histidine 348.

This sequence belongs to the AB hydrolase superfamily. In terms of assembly, homodimer. As to expression, highly expressed in pistil and bulb scales. Lower expression in stem, and barely detected in root, leaf, petal and stamen.

The protein resides in the plastid. Its subcellular location is the amyloplast. The enzyme catalyses 6-tuliposide A = tulipalin A + D-glucose. Functionally, lactone-forming carboxylesterases, specifically catalyzing intramolecular transesterification, but not hydrolysis. Involved in the biosynthesis of tulipalins, defensive chemicals that show antimicrobial activities against a broad range of strains of bacteria and fungi. Substrates are 6-tuliposide A &gt; 6-tuliposide B. This Tulipa gesneriana (Garden tulip) protein is Tuliposide A-converting enzyme b2, amyloplastic (TCEA-B2).